Here is a 213-residue protein sequence, read N- to C-terminus: MCQYFLKKIRNVWERWFTYRLWFGLSMVSIAVIFGPLTGAHVNPAVTIDFWEVGKFPTELVLVYIIAQCIGAFIVALIVWLLFKDHLDEEDNQNCQLGSFATIATNSNNLRNLLSEIVTTFSLLFILFTLNHQQPTNGVAMFFVFTGVAGGVMSFGGLTSYAINPARDFMLRLIHAIMPIKNKGTSNFDYAWVPVLRPVIGAILAAWLYKALF.

The helical transmembrane segment at 22-42 threads the bilayer; it reads WFGLSMVSIAVIFGPLTGAHV. Positions 43 to 45 match the NPA 1 motif; sequence NPA. 3 helical membrane passes run 63 to 83, 112 to 132, and 138 to 158; these read VYII…WLLF, NLLS…TLNH, and GVAM…FGGL. An NPA 2 motif is present at residues 164–166; sequence NPA. Residues 188-208 traverse the membrane as a helical segment; it reads FDYAWVPVLRPVIGAILAAWL.

It belongs to the MIP/aquaporin (TC 1.A.8) family.

It localises to the cell membrane. This is an uncharacterized protein from Haemophilus influenzae (strain ATCC 51907 / DSM 11121 / KW20 / Rd).